The following is a 100-amino-acid chain: Small ribosomal subunit protein uS14c (100 aa).

Belongs to the universal ribosomal protein uS14 family. As to quaternary structure, part of the 30S ribosomal subunit.

Its subcellular location is the plastid. The protein localises to the chloroplast. Functionally, binds 16S rRNA, required for the assembly of 30S particles. The protein is Small ribosomal subunit protein uS14c of Cyanidioschyzon merolae (strain NIES-3377 / 10D) (Unicellular red alga).